Reading from the N-terminus, the 501-residue chain is Amidophosphoribosyltransferase (501 aa).

C2 (nucleophile) is an active-site residue. Positions 2–234 (CGIVGIVGKS…PGEAVYITEE (233 aa)) constitute a Glutamine amidotransferase type-2 domain. Residues T303, D365, and D366 each coordinate Mg(2+).

The protein in the C-terminal section; belongs to the purine/pyrimidine phosphoribosyltransferase family. Mg(2+) serves as cofactor.

It catalyses the reaction 5-phospho-beta-D-ribosylamine + L-glutamate + diphosphate = 5-phospho-alpha-D-ribose 1-diphosphate + L-glutamine + H2O. Its pathway is purine metabolism; IMP biosynthesis via de novo pathway; N(1)-(5-phospho-D-ribosyl)glycinamide from 5-phospho-alpha-D-ribose 1-diphosphate: step 1/2. Functionally, catalyzes the formation of phosphoribosylamine from phosphoribosylpyrophosphate (PRPP) and glutamine. The polypeptide is Amidophosphoribosyltransferase (Pseudomonas aeruginosa (strain ATCC 15692 / DSM 22644 / CIP 104116 / JCM 14847 / LMG 12228 / 1C / PRS 101 / PAO1)).